Consider the following 481-residue polypeptide: Cytochrome P450 monooxygenase dpfgJ (481 aa).

A helical membrane pass occupies residues 23–43 (LVFTQAAVIGSILFVFLLGLY). Asparagine 338 carries an N-linked (GlcNAc...) asparagine glycan. Cysteine 427 serves as a coordination point for heme.

This sequence belongs to the cytochrome P450 family. Heme is required as a cofactor.

Its subcellular location is the membrane. The protein operates within secondary metabolite biosynthesis; terpenoid biosynthesis. Cytochrome P450 monooxygenase; part of the gene cluster that mediates the biosynthesis of diterpenoid pyrones. The first step of the pathway is the synthesis of the alpha-pyrone moiety by the polyketide synthase dpfgA via condensation of one acetyl-CoA starter unit with 3 malonyl-CoA units and 2 methylations. The alpha-pyrone is then combined with geranylgeranyl pyrophosphate (GGPP) formed by the GGPP synthase dpfgD through the action of the prenyltransferase dpfgC to yield a linear alpha-pyrone diterpenoid. Subsequent steps in the diterpenoid pyrone biosynthetic pathway involve the decalin core formation, which is initiated by the epoxidation of the C10-C11 olefin by the FAD-dependent oxidoreductase dpfgE, and is followed by a cyclization cascade catalyzed by the terpene cyclase dpfgB. The short chain dehydrogenase/reductase dpfgG then oxidizes the 8S hydroxy group to a ketone and the short chain dehydrogenase/reductase dpfgH reduces the ketone to the 8R hydroxy group to yield higginsianin B. Higginsianin B is further methylated by the methyltransferase dpfgI to produce the intermediate named FDDP B. The cytochrome P450 monooxygenase dfgpJ then catalyzes a three-step oxidation at C-27 to generate a carboxylic acid as well as C-26 hydroxylation. Finally, methyltransferase dpfgK methylates the carboxylic acid generated by dpfgJ, yielding the final diterpenoid pyrones from the pathway which were named FDDP D and FDDP E. The polypeptide is Cytochrome P450 monooxygenase dpfgJ (Gibberella zeae (strain ATCC MYA-4620 / CBS 123657 / FGSC 9075 / NRRL 31084 / PH-1) (Wheat head blight fungus)).